The chain runs to 397 residues: Acetate kinase (397 aa).

Residue Asn-8 participates in Mg(2+) binding. Lys-15 contacts ATP. Arg-92 is a binding site for substrate. The active-site Proton donor/acceptor is the Asp-149. Residues 209-213, 283-285, and 331-335 contribute to the ATP site; these read HLGNG, DFR, and GVGEN. A Mg(2+)-binding site is contributed by Glu-385.

It belongs to the acetokinase family. As to quaternary structure, homodimer. Requires Mg(2+) as cofactor. The cofactor is Mn(2+).

Its subcellular location is the cytoplasm. The catalysed reaction is acetate + ATP = acetyl phosphate + ADP. Its pathway is metabolic intermediate biosynthesis; acetyl-CoA biosynthesis; acetyl-CoA from acetate: step 1/2. Functionally, catalyzes the formation of acetyl phosphate from acetate and ATP. Can also catalyze the reverse reaction. The protein is Acetate kinase of Corynebacterium glutamicum (strain ATCC 13032 / DSM 20300 / JCM 1318 / BCRC 11384 / CCUG 27702 / LMG 3730 / NBRC 12168 / NCIMB 10025 / NRRL B-2784 / 534).